The primary structure comprises 377 residues: Succinyl-diaminopimelate desuccinylase (377 aa).

Residue H66 coordinates Zn(2+). D68 is a catalytic residue. D99 is a binding site for Zn(2+). The Proton acceptor role is filled by E133. 3 residues coordinate Zn(2+): E134, E162, and H348.

Belongs to the peptidase M20A family. DapE subfamily. Homodimer. Zn(2+) serves as cofactor. Requires Co(2+) as cofactor.

It catalyses the reaction N-succinyl-(2S,6S)-2,6-diaminopimelate + H2O = (2S,6S)-2,6-diaminopimelate + succinate. Its pathway is amino-acid biosynthesis; L-lysine biosynthesis via DAP pathway; LL-2,6-diaminopimelate from (S)-tetrahydrodipicolinate (succinylase route): step 3/3. Functionally, catalyzes the hydrolysis of N-succinyl-L,L-diaminopimelic acid (SDAP), forming succinate and LL-2,6-diaminopimelate (DAP), an intermediate involved in the bacterial biosynthesis of lysine and meso-diaminopimelic acid, an essential component of bacterial cell walls. This Bordetella avium (strain 197N) protein is Succinyl-diaminopimelate desuccinylase.